The chain runs to 460 residues: Bifunctional protein GlmU (460 aa).

Positions 1 to 235 (MTLTAAIVLA…PLSVEGVNDR (235 aa)) are pyrophosphorylase. Residues 9–12 (LAAG), lysine 23, glutamine 76, and 81–82 (GT) contribute to the UDP-N-acetyl-alpha-D-glucosamine site. Residue aspartate 109 coordinates Mg(2+). Residues glycine 146, glutamate 161, asparagine 176, and asparagine 233 each contribute to the UDP-N-acetyl-alpha-D-glucosamine site. Position 233 (asparagine 233) interacts with Mg(2+). A linker region spans residues 236–256 (VQLASLAKAHNLRVCRQWMLD). The segment at 257-460 (GVTIVDPQTT…VDNWKPAWER (204 aa)) is N-acetyltransferase. Residues arginine 338 and lysine 356 each coordinate UDP-N-acetyl-alpha-D-glucosamine. The active-site Proton acceptor is the histidine 368. Residues tyrosine 371 and asparagine 382 each coordinate UDP-N-acetyl-alpha-D-glucosamine. Residues 391 to 392 (NY) and alanine 428 contribute to the acetyl-CoA site.

In the N-terminal section; belongs to the N-acetylglucosamine-1-phosphate uridyltransferase family. This sequence in the C-terminal section; belongs to the transferase hexapeptide repeat family. Homotrimer. Requires Mg(2+) as cofactor.

The protein localises to the cytoplasm. The catalysed reaction is alpha-D-glucosamine 1-phosphate + acetyl-CoA = N-acetyl-alpha-D-glucosamine 1-phosphate + CoA + H(+). The enzyme catalyses N-acetyl-alpha-D-glucosamine 1-phosphate + UTP + H(+) = UDP-N-acetyl-alpha-D-glucosamine + diphosphate. It participates in nucleotide-sugar biosynthesis; UDP-N-acetyl-alpha-D-glucosamine biosynthesis; N-acetyl-alpha-D-glucosamine 1-phosphate from alpha-D-glucosamine 6-phosphate (route II): step 2/2. Its pathway is nucleotide-sugar biosynthesis; UDP-N-acetyl-alpha-D-glucosamine biosynthesis; UDP-N-acetyl-alpha-D-glucosamine from N-acetyl-alpha-D-glucosamine 1-phosphate: step 1/1. It functions in the pathway bacterial outer membrane biogenesis; LPS lipid A biosynthesis. Its function is as follows. Catalyzes the last two sequential reactions in the de novo biosynthetic pathway for UDP-N-acetylglucosamine (UDP-GlcNAc). The C-terminal domain catalyzes the transfer of acetyl group from acetyl coenzyme A to glucosamine-1-phosphate (GlcN-1-P) to produce N-acetylglucosamine-1-phosphate (GlcNAc-1-P), which is converted into UDP-GlcNAc by the transfer of uridine 5-monophosphate (from uridine 5-triphosphate), a reaction catalyzed by the N-terminal domain. The protein is Bifunctional protein GlmU of Bifidobacterium animalis subsp. lactis (strain AD011).